Here is a 957-residue protein sequence, read N- to C-terminus: Retinoblastoma-related protein 1 (957 aa).

Residues 369–569 (TPVSTAMTTA…EKGSSMYNSL (201 aa)) form a domain A region. Residues 369–808 (TPVSTAMTTA…NEVFIPTVKP (440 aa)) form a pocket region. Residues 570 to 677 (IVARPTLSAE…PAAGGETCAE (108 aa)) are spacer. A domain B region spans residues 678 to 808 (TGIGVFLSKI…NEVFIPTVKP (131 aa)). The disordered stretch occupies residues 814–854 (GPGTSPNRNNEPKSGGDAASFPESPRLSRFPNLPDMSPKKV).

It belongs to the retinoblastoma protein (RB) family.

It localises to the nucleus. Its function is as follows. Regulator of biological processes that recruits a histone deacetylase to control gene transcription. May play a role in the entry into mitosis, negatively regulating the cell proliferation. Formation of stable complexes with geminiviridae replication-associated proteins may create a cellular environment which favors viral DNA replication. The sequence is that of Retinoblastoma-related protein 1 (RBR1) from Triticum aestivum (Wheat).